A 210-amino-acid polypeptide reads, in one-letter code: RNA chaperone ProQ (210 aa).

Positions 98–127 are enriched in basic and acidic residues; sequence HAKASLEESKAKVAARRKEQAKKAREEAKA. Residues 98–155 are disordered; that stretch reads HAKASLEESKAKVAARRKEQAKKAREEAKAKKPARATTPPKRRPQPAAVAKKQEKPVE.

This sequence belongs to the ProQ family.

Its subcellular location is the cytoplasm. In terms of biological role, RNA chaperone with significant RNA binding, RNA strand exchange and RNA duplexing activities. In Aliivibrio salmonicida (strain LFI1238) (Vibrio salmonicida (strain LFI1238)), this protein is RNA chaperone ProQ.